Reading from the N-terminus, the 286-residue chain is Light-independent protochlorophyllide reductase iron-sulfur ATP-binding protein (286 aa).

ATP is bound by residues 10 to 15 (GIGKST) and Lys-39. Residue Ser-14 participates in Mg(2+) binding. [4Fe-4S] cluster-binding residues include Cys-95 and Cys-129. 180 to 181 (NR) contributes to the ATP binding site.

Belongs to the NifH/BchL/ChlL family. As to quaternary structure, homodimer. Protochlorophyllide reductase is composed of three subunits; ChlL, ChlN and ChlB. [4Fe-4S] cluster is required as a cofactor.

It carries out the reaction chlorophyllide a + oxidized 2[4Fe-4S]-[ferredoxin] + 2 ADP + 2 phosphate = protochlorophyllide a + reduced 2[4Fe-4S]-[ferredoxin] + 2 ATP + 2 H2O. The protein operates within porphyrin-containing compound metabolism; chlorophyll biosynthesis (light-independent). In terms of biological role, component of the dark-operative protochlorophyllide reductase (DPOR) that uses Mg-ATP and reduced ferredoxin to reduce ring D of protochlorophyllide (Pchlide) to form chlorophyllide a (Chlide). This reaction is light-independent. The L component serves as a unique electron donor to the NB-component of the complex, and binds Mg-ATP. The polypeptide is Light-independent protochlorophyllide reductase iron-sulfur ATP-binding protein (Cyanothece sp. (strain PCC 7425 / ATCC 29141)).